Here is a 129-residue protein sequence, read N- to C-terminus: Glycine cleavage system H protein (129 aa).

Residues 24 to 106 (TYTVGITEHA…YTDGWIFKIK (83 aa)) form the Lipoyl-binding domain. An N6-lipoyllysine modification is found at Lys-65.

This sequence belongs to the GcvH family. In terms of assembly, the glycine cleavage system is composed of four proteins: P, T, L and H. It depends on (R)-lipoate as a cofactor.

Its function is as follows. The glycine cleavage system catalyzes the degradation of glycine. The H protein shuttles the methylamine group of glycine from the P protein to the T protein. The sequence is that of Glycine cleavage system H protein from Klebsiella pneumoniae subsp. pneumoniae (strain ATCC 700721 / MGH 78578).